The following is a 450-amino-acid chain: Signal recognition particle 54 kDa protein (450 aa).

Residues 107-114, 188-192, and 247-250 contribute to the GTP site; these read GIQGSGKT, DTAGR, and TKLD.

It belongs to the GTP-binding SRP family. SRP54 subfamily. As to quaternary structure, part of the signal recognition particle protein translocation system, which is composed of SRP and FtsY. Archaeal SRP consists of a 7S RNA molecule of 300 nucleotides and two protein subunits: SRP54 and SRP19.

It is found in the cytoplasm. The enzyme catalyses GTP + H2O = GDP + phosphate + H(+). Involved in targeting and insertion of nascent membrane proteins into the cytoplasmic membrane. Binds to the hydrophobic signal sequence of the ribosome-nascent chain (RNC) as it emerges from the ribosomes. The SRP-RNC complex is then targeted to the cytoplasmic membrane where it interacts with the SRP receptor FtsY. This Methanococcus vannielii (strain ATCC 35089 / DSM 1224 / JCM 13029 / OCM 148 / SB) protein is Signal recognition particle 54 kDa protein.